Consider the following 239-residue polypeptide: C-8 sterol isomerase erg2 (239 aa).

Residue Asn-11 is glycosylated (N-linked (GlcNAc...) asparagine). The chain crosses the membrane as a helical span at residues Lys-27 to Ala-47. An N-linked (GlcNAc...) asparagine glycan is attached at Asn-73.

Belongs to the ERG2 family.

Its subcellular location is the endoplasmic reticulum membrane. It carries out the reaction fecosterol = episterol. It functions in the pathway steroid metabolism; ergosterol biosynthesis. In terms of biological role, C-8 sterol isomerase; part of the third module of ergosterol biosynthesis pathway that includes the late steps of the pathway. Erg2 catalyzes the reaction which results in unsaturation at C-7 in the B ring of sterols and thus converts fecosterol to episterol. The third module or late pathway involves the ergosterol synthesis itself through consecutive reactions that mainly occur in the endoplasmic reticulum (ER) membrane. Firstly, the squalene synthase erg9 catalyzes the condensation of 2 farnesyl pyrophosphate moieties to form squalene, which is the precursor of all steroids. Squalene synthase is crucial for balancing the incorporation of farnesyl diphosphate (FPP) into sterol and nonsterol isoprene synthesis. Secondly, squalene is converted into lanosterol by the consecutive action of the squalene epoxidase erg1 and the lanosterol synthase erg7. Then, the delta(24)-sterol C-methyltransferase erg6 methylates lanosterol at C-24 to produce eburicol. Eburicol is the substrate of the sterol 14-alpha demethylase encoded by cyp51A and cyp51B, to yield 4,4,24-trimethyl ergosta-8,14,24(28)-trienol. The C-14 reductase erg24 then reduces the C14=C15 double bond which leads to 4,4-dimethylfecosterol. A sequence of further demethylations at C-4, involving the C-4 demethylation complex containing the C-4 methylsterol oxidases erg25A or erg25B, the sterol-4-alpha-carboxylate 3-dehydrogenase erg26 and the 3-keto-steroid reductase erg27, leads to the production of fecosterol via 4-methylfecosterol. The C-8 sterol isomerase erg2 then catalyzes the reaction which results in unsaturation at C-7 in the B ring of sterols and thus converts fecosterol to episterol. The sterol-C5-desaturase erg3B then catalyzes the introduction of a C-5 double bond in the B ring to produce 5-dehydroepisterol. The 2 other sterol-C5-desaturases, erg3A and erg3C, seem to be less important in ergosterol biosynthesis. The C-22 sterol desaturase erg5 further converts 5-dehydroepisterol into ergosta-5,7,22,24(28)-tetraen-3beta-ol by forming the C-22(23) double bond in the sterol side chain. Finally, ergosta-5,7,22,24(28)-tetraen-3beta-ol is substrate of the C-24(28) sterol reductases erg4A and erg4B to produce ergosterol. Possible alternative sterol biosynthetic pathways might exist from fecosterol to ergosterol, depending on the activities of the erg3 isoforms. The chain is C-8 sterol isomerase erg2 from Aspergillus fumigatus (strain ATCC MYA-4609 / CBS 101355 / FGSC A1100 / Af293) (Neosartorya fumigata).